The primary structure comprises 349 residues: ATP phosphoribosyltransferase regulatory subunit (349 aa).

Residues 327–349 (GRGRGVRPRRASARGGRARARPR) are disordered. Residues 330–349 (RGVRPRRASARGGRARARPR) are compositionally biased toward basic residues.

Belongs to the class-II aminoacyl-tRNA synthetase family. HisZ subfamily. Heteromultimer composed of HisG and HisZ subunits.

Its subcellular location is the cytoplasm. It functions in the pathway amino-acid biosynthesis; L-histidine biosynthesis; L-histidine from 5-phospho-alpha-D-ribose 1-diphosphate: step 1/9. Functionally, required for the first step of histidine biosynthesis. May allow the feedback regulation of ATP phosphoribosyltransferase activity by histidine. The polypeptide is ATP phosphoribosyltransferase regulatory subunit (Anaeromyxobacter dehalogenans (strain 2CP-1 / ATCC BAA-258)).